A 169-amino-acid chain; its full sequence is tRNA (cytidine(56)-2'-O)-methyltransferase (169 aa).

S-adenosyl-L-methionine contacts are provided by residues Leu-77, 103-107 (GSEKV), and 121-128 (IGNQPHSE).

This sequence belongs to the aTrm56 family. Homodimer.

It localises to the cytoplasm. The catalysed reaction is cytidine(56) in tRNA + S-adenosyl-L-methionine = 2'-O-methylcytidine(56) in tRNA + S-adenosyl-L-homocysteine + H(+). Functionally, specifically catalyzes the AdoMet-dependent 2'-O-ribose methylation of cytidine at position 56 in tRNAs. In Sulfurisphaera tokodaii (strain DSM 16993 / JCM 10545 / NBRC 100140 / 7) (Sulfolobus tokodaii), this protein is tRNA (cytidine(56)-2'-O)-methyltransferase.